The sequence spans 757 residues: MSVAEIEEGVFEATATIDNGSFGTRTIRFETGRLAQQAAGAVVAYLDDENMLLSATTASKSPKEHFDFFPLTVDVEERMYAAGRIPGSFFRREGRPSTDAILTCRLIDRPLRPSFVDGLRNEIQVVVTILSLDPNDLYDVLAINAASASTQLGGLPFSGPIGGVRVALIDGTWVAFPTVEQLERAVFDMVVAGRKVDGADGPDVAIMMVEAEATSNVIELIDGGAQAPTETVVAQGLEAAKPFIEVLCTAQQELADKAARPTSDYPTFPDYGDDVYYSVASVATDELSKALTIGGKAERDARTDELKAEVLARLAETYEGREKEVSAAFRSLTKKLVRQRILTDHFRIDGRGITDIRALSAEVAVVPRAHGSALFQRGETQILGVTTLDMVKMAQQIDSLGPETTKRYMHHYNFPPFSTGETGRVGSPKRREIGHGALAERALVPVLPSLEDFPYAIRQVSEALGSNGSTSMGSVCASTLALLNAGVPLKAPVAGIAMGLVSDDIEVEAGDGTKSLERRFVTLTDILGAEDAFGDMDFKVAGTKDFVTALQLDTKLDGIPSQVLAGALSQAKDARLTILEVMAEAIDEPDEMSPYAPRVTTIRVPVDKIGEVIGPKGKIINAITEETGAQISIEDDGTVFVGATDGPSAQAAIDRINAIANPQLPTVGERFLGTVVKTTDFGAFVSLLPGRDGLVHISKLGKGKRIAKVEDVVNVGDKLRVEIADIDKRGKISLVLVEEDNSAPADTPAAAPADATS.

Mg(2+) is bound by residues D531 and D537. Residues 597–656 (PRVTTIRVPVDKIGEVIGPKGKIINAITEETGAQISIEDDGTVFVGATDGPSAQAAIDRI) form the KH domain. Residues 668-737 (GERFLGTVVK…KRGKISLVLV (70 aa)) form the S1 motif domain.

Belongs to the polyribonucleotide nucleotidyltransferase family. Mg(2+) is required as a cofactor.

The protein localises to the cytoplasm. The enzyme catalyses RNA(n+1) + phosphate = RNA(n) + a ribonucleoside 5'-diphosphate. Involved in mRNA degradation. Catalyzes the phosphorolysis of single-stranded polyribonucleotides processively in the 3'- to 5'-direction. The sequence is that of Polyribonucleotide nucleotidyltransferase from Mycolicibacterium paratuberculosis (strain ATCC BAA-968 / K-10) (Mycobacterium paratuberculosis).